We begin with the raw amino-acid sequence, 739 residues long: Catalase-peroxidase (739 aa).

The first 23 residues, 1–23 (MLKKIVTALGMSGMLLAANSAIA), serve as a signal peptide directing secretion. The segment at residues 100–221 (WHDAGTYRLA…YAATQMGLIY (122 aa)) is a cross-link (tryptophyl-tyrosyl-methioninium (Trp-Tyr) (with M-247)). Catalysis depends on H101, which acts as the Proton acceptor. Residues 221-247 (YVNPEGPDGKPDIKGAASEIRQAFRAM) constitute a cross-link (tryptophyl-tyrosyl-methioninium (Tyr-Met) (with W-100)). H262 is a binding site for heme b.

The protein belongs to the peroxidase family. Peroxidase/catalase subfamily. In terms of assembly, homodimer or homotetramer. Heme b is required as a cofactor. Post-translationally, formation of the three residue Trp-Tyr-Met cross-link is important for the catalase, but not the peroxidase activity of the enzyme.

It catalyses the reaction H2O2 + AH2 = A + 2 H2O. It carries out the reaction 2 H2O2 = O2 + 2 H2O. In terms of biological role, bifunctional enzyme with both catalase and broad-spectrum peroxidase activity. The sequence is that of Catalase-peroxidase from Francisella philomiragia subsp. philomiragia (strain ATCC 25017 / CCUG 19701 / FSC 153 / O#319-036).